A 308-amino-acid chain; its full sequence is UDP-N-acetylenolpyruvoylglucosamine reductase (308 aa).

The FAD-binding PCMH-type domain occupies 35–200 (RVGGPAQVLF…TSARFRGEPM (166 aa)). The active site involves arginine 180. The segment covering 211–226 (EVQRHRETAQPVREKT) has biased composition (basic and acidic residues). The interval 211–236 (EVQRHRETAQPVREKTGGSTFKNPPG) is disordered. The active-site Proton donor is the serine 229. The active site involves glutamate 299.

Belongs to the MurB family. FAD serves as cofactor.

The protein localises to the cytoplasm. It catalyses the reaction UDP-N-acetyl-alpha-D-muramate + NADP(+) = UDP-N-acetyl-3-O-(1-carboxyvinyl)-alpha-D-glucosamine + NADPH + H(+). It participates in cell wall biogenesis; peptidoglycan biosynthesis. Its function is as follows. Cell wall formation. The protein is UDP-N-acetylenolpyruvoylglucosamine reductase of Rhodopseudomonas palustris (strain BisB18).